The primary structure comprises 372 residues: Putative glutamate--cysteine ligase 2 (372 aa).

It belongs to the glutamate--cysteine ligase type 2 family. YbdK subfamily. As to quaternary structure, homodimer.

It carries out the reaction L-cysteine + L-glutamate + ATP = gamma-L-glutamyl-L-cysteine + ADP + phosphate + H(+). In terms of biological role, ATP-dependent carboxylate-amine ligase which exhibits weak glutamate--cysteine ligase activity. The sequence is that of Putative glutamate--cysteine ligase 2 from Citrobacter koseri (strain ATCC BAA-895 / CDC 4225-83 / SGSC4696).